Consider the following 476-residue polypeptide: Aspartyl/glutamyl-tRNA(Asn/Gln) amidotransferase subunit B (476 aa).

Belongs to the GatB/GatE family. GatB subfamily. In terms of assembly, heterotrimer of A, B and C subunits.

The catalysed reaction is L-glutamyl-tRNA(Gln) + L-glutamine + ATP + H2O = L-glutaminyl-tRNA(Gln) + L-glutamate + ADP + phosphate + H(+). It carries out the reaction L-aspartyl-tRNA(Asn) + L-glutamine + ATP + H2O = L-asparaginyl-tRNA(Asn) + L-glutamate + ADP + phosphate + 2 H(+). Its function is as follows. Allows the formation of correctly charged Asn-tRNA(Asn) or Gln-tRNA(Gln) through the transamidation of misacylated Asp-tRNA(Asn) or Glu-tRNA(Gln) in organisms which lack either or both of asparaginyl-tRNA or glutaminyl-tRNA synthetases. The reaction takes place in the presence of glutamine and ATP through an activated phospho-Asp-tRNA(Asn) or phospho-Glu-tRNA(Gln). In Lactobacillus johnsonii (strain CNCM I-12250 / La1 / NCC 533), this protein is Aspartyl/glutamyl-tRNA(Asn/Gln) amidotransferase subunit B.